Consider the following 466-residue polypeptide: Phosphomethylpyrimidine synthase (466 aa).

Substrate-binding positions include N80, M109, Y139, H175, 195–197 (SRG), 236–239 (DSLR), and E275. Residue H279 participates in Zn(2+) binding. Y302 is a binding site for substrate. Position 343 (H343) interacts with Zn(2+). The [4Fe-4S] cluster site is built by C423, C426, and C431.

Belongs to the ThiC family. [4Fe-4S] cluster is required as a cofactor.

The catalysed reaction is 5-amino-1-(5-phospho-beta-D-ribosyl)imidazole + S-adenosyl-L-methionine = 4-amino-2-methyl-5-(phosphooxymethyl)pyrimidine + CO + 5'-deoxyadenosine + formate + L-methionine + 3 H(+). It participates in cofactor biosynthesis; thiamine diphosphate biosynthesis. Its function is as follows. Catalyzes the synthesis of the hydroxymethylpyrimidine phosphate (HMP-P) moiety of thiamine from aminoimidazole ribotide (AIR) in a radical S-adenosyl-L-methionine (SAM)-dependent reaction. This Prochlorococcus marinus (strain NATL2A) protein is Phosphomethylpyrimidine synthase.